Here is a 235-residue protein sequence, read N- to C-terminus: Serine/arginine-rich splicing factor 7 (235 aa).

Positions 11-84 (TKVYVGNLGT…SRVRVELSTG (74 aa)) constitute an RRM domain. Lys-24 is subject to N6-acetyllysine; alternate. Lys-24 participates in a covalent cross-link: Glycyl lysine isopeptide (Lys-Gly) (interchain with G-Cter in SUMO2); alternate. The residue at position 32 (Ser-32) is a Phosphoserine. A sufficient for interaction with NXF1 region spans residues 81–98 (LSTGMPRRSRFDRPPARR). A CCHC-type zinc finger spans residues 104–120 (DRCYECGEKGHYAYDCH). Basic residues predominate over residues 123–180 (SRRRRSRSRSRSHSRSRGRRYSRSRSRSRGRRSRSASPRRSRSVSLRRSRSASLRRSR). A disordered region spans residues 123-235 (SRRRRSRSRS…RRSASPERVD (113 aa)). 4 tandem repeats follow at residues 153-160 (RRSRSASP), 161-168 (RRSRSVSL), 169-176 (RRSRSASL), and 177-184 (RRSRSGSI). Residues 153 to 223 (RRSRSASPRR…SPKRSRSPSG (71 aa)) are 6 X 8 AA repeats of R-R-S-R-S-X-S-X. Residues Ser-163, Ser-165, and Ser-167 each carry the phosphoserine modification. Residues Ser-181, Ser-183, Ser-189, Ser-191, and Ser-193 each carry the phosphoserine modification. The span at 187 to 219 (SRSRSRSRSRSRSLSRPRSSRSKSRSPSPKRSR) shows a compositional bias: basic residues. The 5; approximate repeat unit spans residues 208 to 215 (SKSRSPSP). One copy of the 6; approximate repeat lies at 216–223 (KRSRSPSG). A phosphoserine mark is found at Ser-228 and Ser-230.

Belongs to the splicing factor SR family. Found in large molecular weight complexes containing CCNL1 and the p110 isoforms of either CDC2L1 or CDC2L2. Interacts with CCNL2 and CPSF6. Interacts with NXF1. Interacts with YTHDC1. In terms of processing, extensively phosphorylated on serine residues in the RS domain.

It localises to the nucleus. It is found in the cytoplasm. Its function is as follows. Required for pre-mRNA splicing. Represses the splicing of MAPT/Tau exon 10. May function as export adapter involved in mRNA nuclear export such as of histone H2A. Binds mRNA which is thought to be transferred to the NXF1-NXT1 heterodimer for export (TAP/NXF1 pathway); enhances NXF1-NXT1 RNA-binding activity. RNA-binding is semi-sequence specific. This chain is Serine/arginine-rich splicing factor 7 (SRSF7), found in Bos taurus (Bovine).